Reading from the N-terminus, the 180-residue chain is Zinc finger protein 740 (180 aa).

Polar residues predominate over residues 1 to 11 (MMLSQIASKQA). The tract at residues 1-62 (MMLSQIASKQ…KEDDSLAEAS (62 aa)) is disordered. A Glycyl lysine isopeptide (Lys-Gly) (interchain with G-Cter in SUMO2) cross-link involves residue K9. Residue S19 is modified to Phosphoserine. A compositionally biased stretch (basic and acidic residues) spans 31-56 (CKPRFDLSSKGHRKDSDKSRNRKEDD). 2 C2H2-type zinc fingers span residues 88–110 (FICE…VLIH) and 116–138 (FECD…KRVH). The segment at 144-166 (YQCERCHQCFSRTDRLLRHKRMC) adopts a C2H2-type 3; atypical zinc-finger fold.

It belongs to the krueppel C2H2-type zinc-finger protein family.

It is found in the nucleus. Its function is as follows. May be involved in transcriptional regulation. The protein is Zinc finger protein 740 (Znf740) of Mus musculus (Mouse).